The following is a 294-amino-acid chain: ATP synthase gamma chain (294 aa).

Belongs to the ATPase gamma chain family. F-type ATPases have 2 components, CF(1) - the catalytic core - and CF(0) - the membrane proton channel. CF(1) has five subunits: alpha(3), beta(3), gamma(1), delta(1), epsilon(1). CF(0) has three main subunits: a, b and c.

The protein resides in the cell inner membrane. Produces ATP from ADP in the presence of a proton gradient across the membrane. The gamma chain is believed to be important in regulating ATPase activity and the flow of protons through the CF(0) complex. This Paraburkholderia xenovorans (strain LB400) protein is ATP synthase gamma chain.